Reading from the N-terminus, the 421-residue chain is MCLRFFSPVPGSTSSATNVTMVVSAGPWSSEKAEMNILEINEKLRPQLAENKQQFRNMKQKFLVTQMAGFLANQQNKYKYEECKDLIKSMLREELQFKEEKLAEQLKQAEELRQYKVLVHSQERELIQLREKLREGRDASHSLNQHLQALLTPDKHDNSQGQDFREQLAEGCRLARHLVHKLSPENDTDEDENDKTKELDKVQESPAPREEQKAEEKEVPEDSLEECAITYSNSHGPSDSNPPHKNIKITSEEDKVNSILVVDSESSQDEWQDALNILLENQNDDEEEEGKAPVPPQVTLWICGLKLQESEEKEVLQDSPEERVTTSCSDHDVSQSYQPCEGTFLALVEQKVCSAQDVASEHSNSKGEETPLGFPDTKYCWKDEKDERMSQKVAFLLDEKNYNSKPSSIPNTTLQGSFTED.

Positions 87 to 143 (IKSMLREELQFKEEKLAEQLKQAEELRQYKVLVHSQERELIQLREKLREGRDASHSL) form a coiled coil. 3 disordered regions span residues 179–251 (VHKL…KITS), 312–334 (EKEVLQDSPEERVTTSCSDHDVS), and 402–421 (YNSKPSSIPNTTLQGSFTED). Olduvai domains are found at residues 190 to 279 (EDEN…NILL) and 280 to 391 (ENQN…RMSQ). Basic and acidic residues predominate over residues 194–217 (DKTKELDKVQESPAPREEQKAEEK). Residues 230–243 (TYSNSHGPSDSNPP) show a composition bias toward polar residues. Residues 312-333 (EKEVLQDSPEERVTTSCSDHDV) are compositionally biased toward basic and acidic residues. A compositionally biased stretch (polar residues) spans 403–421 (NSKPSSIPNTTLQGSFTED).

Belongs to the NBPF family.

The protein resides in the cytoplasm. The protein is Putative NBPF family member NBPF7 of Homo sapiens (Human).